A 156-amino-acid polypeptide reads, in one-letter code: Ribosomal RNA large subunit methyltransferase H (156 aa).

Residues L73, G104, and 123-128 each bind S-adenosyl-L-methionine; that span reads VSSLTL.

This sequence belongs to the RNA methyltransferase RlmH family. As to quaternary structure, homodimer.

It is found in the cytoplasm. The enzyme catalyses pseudouridine(1915) in 23S rRNA + S-adenosyl-L-methionine = N(3)-methylpseudouridine(1915) in 23S rRNA + S-adenosyl-L-homocysteine + H(+). Its function is as follows. Specifically methylates the pseudouridine at position 1915 (m3Psi1915) in 23S rRNA. This chain is Ribosomal RNA large subunit methyltransferase H, found in Burkholderia mallei (strain NCTC 10247).